Reading from the N-terminus, the 311-residue chain is Phosphopantothenate--cysteine ligase (311 aa).

Residue A2 is modified to N-acetylalanine.

Belongs to the PPC synthetase family. Homodimer.

It catalyses the reaction (R)-4'-phosphopantothenate + L-cysteine + ATP = N-[(R)-4-phosphopantothenoyl]-L-cysteine + AMP + diphosphate + H(+). The catalysed reaction is (R)-4'-phosphopantothenate + L-cysteine + CTP = N-[(R)-4-phosphopantothenoyl]-L-cysteine + CMP + diphosphate + H(+). Its pathway is cofactor biosynthesis; coenzyme A biosynthesis; CoA from (R)-pantothenate: step 2/5. In terms of biological role, catalyzes the second step in the biosynthesis of coenzyme A from vitamin B5, where cysteine is conjugated to 4'-phosphopantothenate to form 4-phosphopantothenoylcysteine. Has a preference for ATP over CTP as a cosubstrate. This is Phosphopantothenate--cysteine ligase (Ppcs) from Mus musculus (Mouse).